The primary structure comprises 203 residues: tRNA (guanine-N(7)-)-methyltransferase (203 aa).

S-adenosyl-L-methionine contacts are provided by Glu34, Glu59, Asp86, and Asp107. Asp107 is a catalytic residue. Substrate-binding positions include Lys111, Asp143, and 181 to 184 (TSYE).

This sequence belongs to the class I-like SAM-binding methyltransferase superfamily. TrmB family.

The catalysed reaction is guanosine(46) in tRNA + S-adenosyl-L-methionine = N(7)-methylguanosine(46) in tRNA + S-adenosyl-L-homocysteine. It participates in tRNA modification; N(7)-methylguanine-tRNA biosynthesis. Functionally, catalyzes the formation of N(7)-methylguanine at position 46 (m7G46) in tRNA. This is tRNA (guanine-N(7)-)-methyltransferase from Mycoplasmopsis pulmonis (strain UAB CTIP) (Mycoplasma pulmonis).